A 115-amino-acid polypeptide reads, in one-letter code: Nitrogenase-stabilizing/protective protein NifW (115 aa).

It belongs to the NifW family. Homotrimer; associates with NifD.

May protect the nitrogenase Fe-Mo protein from oxidative damage. In Stutzerimonas stutzeri (strain A1501) (Pseudomonas stutzeri), this protein is Nitrogenase-stabilizing/protective protein NifW.